A 266-amino-acid polypeptide reads, in one-letter code: HLA class II histocompatibility antigen, DR beta 4 chain (266 aa).

Positions 1 to 29 are cleaved as a signal peptide; that stretch reads MVCLKLPGGSCMAALTVTLTVLSSPLALA. A beta-1 region spans residues 30 to 124; the sequence is GDTQPRFLEQ…VESFTVQRRV (95 aa). At 30 to 227 the chain is on the extracellular side; it reads GDTQPRFLEQ…SARSESAQSK (198 aa). 2 disulfide bridges follow: Cys-44–Cys-108 and Cys-146–Cys-202. The N-linked (GlcNAc...) asparagine glycan is linked to Asn-48. The tract at residues 125–227 is beta-2; it reads QPKVTVYPSK…SARSESAQSK (103 aa). The region spanning 126–216 is the Ig-like C1-type domain; sequence PKVTVYPSKT…PSMMSPLTVQ (91 aa). The chain crosses the membrane as a helical span at residues 228-250; it reads MLSGVGGFVLGLLFLGTGLFIYF. Residues 251 to 266 are Cytoplasmic-facing; it reads RNQKGHSGLQPTGLLS. Lys-254 is covalently cross-linked (Glycyl lysine isopeptide (Lys-Gly) (interchain with G-Cter in ubiquitin)).

This sequence belongs to the MHC class II family. As to quaternary structure, heterodimer of an alpha and a beta subunit; also referred as MHC class II molecule. In the endoplasmic reticulum (ER) it forms a heterononamer; 3 MHC class II molecules bind to a CD74 homotrimer (also known as invariant chain or HLA class II histocompatibility antigen gamma chain). In the endosomal/lysosomal system; CD74 undergoes sequential degradation by various proteases; leaving a small fragment termed CLIP on each MHC class II molecule. MHC class II molecule interacts with HLA_DM, and HLA_DO in B-cells, in order to release CLIP and facilitate the binding of antigenic peptides. Ubiquitinated by MARCH1 and MARCH8 at Lys-254 leading to sorting into the endosome system and down-regulation of MHC class II. When associated with ubiquitination of the alpha subunit of HLA-DR: HLA-DRA 'Lys-244', the down-regulation of MHC class II may be highly effective.

It is found in the cell membrane. The protein resides in the endoplasmic reticulum membrane. Its subcellular location is the golgi apparatus. It localises to the trans-Golgi network membrane. The protein localises to the endosome membrane. It is found in the lysosome membrane. The protein resides in the late endosome membrane. Functionally, binds peptides derived from antigens that access the endocytic route of antigen presenting cells (APC) and presents them on the cell surface for recognition by the CD4 T-cells. The peptide binding cleft accommodates peptides of 10-30 residues. The peptides presented by MHC class II molecules are generated mostly by degradation of proteins that access the endocytic route, where they are processed by lysosomal proteases and other hydrolases. Exogenous antigens that have been endocytosed by the APC are thus readily available for presentation via MHC II molecules, and for this reason this antigen presentation pathway is usually referred to as exogenous. As membrane proteins on their way to degradation in lysosomes as part of their normal turn-over are also contained in the endosomal/lysosomal compartments, exogenous antigens must compete with those derived from endogenous components. Autophagy is also a source of endogenous peptides, autophagosomes constitutively fuse with MHC class II loading compartments. In addition to APCs, other cells of the gastrointestinal tract, such as epithelial cells, express MHC class II molecules and CD74 and act as APCs, which is an unusual trait of the GI tract. To produce a MHC class II molecule that presents an antigen, three MHC class II molecules (heterodimers of an alpha and a beta chain) associate with a CD74 trimer in the ER to form a heterononamer. Soon after the entry of this complex into the endosomal/lysosomal system where antigen processing occurs, CD74 undergoes a sequential degradation by various proteases, including CTSS and CTSL, leaving a small fragment termed CLIP (class-II-associated invariant chain peptide). The removal of CLIP is facilitated by HLA-DM via direct binding to the alpha-beta-CLIP complex so that CLIP is released. HLA-DM stabilizes MHC class II molecules until primary high affinity antigenic peptides are bound. The MHC II molecule bound to a peptide is then transported to the cell membrane surface. In B-cells, the interaction between HLA-DM and MHC class II molecules is regulated by HLA-DO. Primary dendritic cells (DCs) also to express HLA-DO. Lysosomal microenvironment has been implicated in the regulation of antigen loading into MHC II molecules, increased acidification produces increased proteolysis and efficient peptide loading. The protein is HLA class II histocompatibility antigen, DR beta 4 chain (HLA-DRB4) of Homo sapiens (Human).